The chain runs to 966 residues: RNA polymerase-associated protein RapA (966 aa).

One can recognise a Helicase ATP-binding domain in the interval 163–337; the sequence is EVGRRIAPRV…FARLHLLDPN (175 aa). 176–183 contacts ATP; it reads DEVGLGKT. Positions 283 to 286 match the DEAH box motif; that stretch reads DEAH. In terms of domain architecture, Helicase C-terminal spans 489-643; sequence RVDWLINLVK…TCPMGAILHE (155 aa).

Belongs to the SNF2/RAD54 helicase family. RapA subfamily. Interacts with the RNAP. Has a higher affinity for the core RNAP than for the holoenzyme. Its ATPase activity is stimulated by binding to RNAP.

Transcription regulator that activates transcription by stimulating RNA polymerase (RNAP) recycling in case of stress conditions such as supercoiled DNA or high salt concentrations. Probably acts by releasing the RNAP, when it is trapped or immobilized on tightly supercoiled DNA. Does not activate transcription on linear DNA. Probably not involved in DNA repair. This Histophilus somni (strain 129Pt) (Haemophilus somnus) protein is RNA polymerase-associated protein RapA.